The sequence spans 207 residues: Small ribosomal subunit protein uS2 (207 aa).

This sequence belongs to the universal ribosomal protein uS2 family.

The sequence is that of Small ribosomal subunit protein uS2 from Nitrosopumilus maritimus (strain SCM1).